The primary structure comprises 853 residues: DNA mismatch repair protein MutS (853 aa).

614 to 621 (GPNMGGKS) is a binding site for ATP.

The protein belongs to the DNA mismatch repair MutS family.

In terms of biological role, this protein is involved in the repair of mismatches in DNA. It is possible that it carries out the mismatch recognition step. This protein has a weak ATPase activity. The protein is DNA mismatch repair protein MutS of Escherichia coli O6:H1 (strain CFT073 / ATCC 700928 / UPEC).